Here is a 259-residue protein sequence, read N- to C-terminus: Ribonuclease HII (259 aa).

An RNase H type-2 domain is found at 72 to 259 (ERIAGIDEAG…PVREALGVQS (188 aa)). The a divalent metal cation site is built by Asp-78, Glu-79, and Asp-170.

This sequence belongs to the RNase HII family. Mn(2+) is required as a cofactor. Mg(2+) serves as cofactor.

The protein localises to the cytoplasm. It catalyses the reaction Endonucleolytic cleavage to 5'-phosphomonoester.. Endonuclease that specifically degrades the RNA of RNA-DNA hybrids. This chain is Ribonuclease HII, found in Geobacillus thermodenitrificans (strain NG80-2).